The following is a 380-amino-acid chain: MAPNIRKNHPLLKMINSSLIDLPTPSNISAWWNFGSLLGICLLTQILTGLLLAAHYTADTTLAFSSVAHTCRNVQYGWLLRNLHANGASFFFICIYLHIGRGFYYGSYLFQETWNTGVVLLLTLMATAFVGYVLPWGQMSFWGATVITNLFSAVPYIGQTLVEWAWGGFSVDNPTLTRFFALHFLLPFMIAGLTLIHLTFLHESGSNNPLGIMSNSDKIPFHPYFSLKDILGFMIMLLLLTTLALFHPNLLSDPKNFTPANPLVTPSHIKPEWYFLFAYAILRSIPNKLGGVLALAASVLILFLIPFLHKSKQRALTFRPLSQLLFWLLVSNLFILTWIGSQPVEHPFIIIGQLASTTYFTIILVLFPITSALENKMLNY.

The next 4 membrane-spanning stretches (helical) occupy residues Phe-34–Ala-54, Trp-78–Ile-99, Trp-114–Leu-134, and Phe-179–Thr-199. 2 residues coordinate heme b: His-84 and His-98. Positions 183 and 197 each coordinate heme b. His-202 lines the a ubiquinone pocket. Transmembrane regions (helical) follow at residues Leu-227 to His-247, Leu-289 to His-309, Leu-321 to Ser-341, and Phe-348 to Pro-368.

This sequence belongs to the cytochrome b family. In terms of assembly, the cytochrome bc1 complex contains 11 subunits: 3 respiratory subunits (MT-CYB, CYC1 and UQCRFS1), 2 core proteins (UQCRC1 and UQCRC2) and 6 low-molecular weight proteins (UQCRH/QCR6, UQCRB/QCR7, UQCRQ/QCR8, UQCR10/QCR9, UQCR11/QCR10 and a cleavage product of UQCRFS1). This cytochrome bc1 complex then forms a dimer. Heme b serves as cofactor.

Its subcellular location is the mitochondrion inner membrane. Component of the ubiquinol-cytochrome c reductase complex (complex III or cytochrome b-c1 complex) that is part of the mitochondrial respiratory chain. The b-c1 complex mediates electron transfer from ubiquinol to cytochrome c. Contributes to the generation of a proton gradient across the mitochondrial membrane that is then used for ATP synthesis. This is Cytochrome b (MT-CYB) from Trogon curucui (Blue-crowned trogon).